The chain runs to 1146 residues: Large proline-rich protein BAG6 (1146 aa).

Met1 is subject to N-acetylmethionine. The 76-residue stretch at 17–92 folds into the Ubiquitin-like domain; sequence LEVLVKTLDS…HLVERAPPQT (76 aa). Disordered regions lie at residues 87 to 128, 186 to 268, 381 to 436, 457 to 525, and 555 to 618; these read RAPP…HDRN, RGGT…HPSP, TMTG…TSHP, QDSG…QGAG, and PGMA…SAAD. The residue at position 96 (Ser96) is a Phosphoserine. A compositionally biased stretch (low complexity) spans 96–108; sequence SGASSGTGSASAT. The span at 109-122 shows a compositional bias: gly residues; that stretch reads HGGGPLPGTRGPGA. Thr117 bears the Phosphothreonine mark. A compositionally biased stretch (polar residues) spans 208–217; it reads VALNSQTSEP. A run of 2 repeats spans residues 236-265 and 410-438. Residues 236 to 650 form a 4 X 29 AA approximate repeats region; that stretch reads RPPTQTPELP…LASPTITVAV (415 aa). Pro residues predominate over residues 239-257; that stretch reads TQTPELPPSGPAPAGPAPA. The span at 394–413 shows a compositional bias: low complexity; the sequence is GAEAASPGSGQASSLPPSSA. Composition is skewed to pro residues over residues 422-433 and 502-515; these read APPPGPAPPPAT and PTPPQARPSHPGGP. Low complexity-rich tracts occupy residues 555–573 and 583–601; these read PGMAPASASAPATAQAQAP and PATASASAGTTNTATTAGP. 2 tandem repeats follow at residues 589 to 616 and 622 to 650. A compositionally biased stretch (pro residues) spans 603–614; it reads PGGPAQPPPPQP. Disordered stretches follow at residues 666 to 711 and 961 to 1146; these read ASQA…ESLP and PQAL…ADDP. Pro residues predominate over residues 670 to 694; it reads APPPPPPPPPPPPAPEQQTTPPPGS. Residues 977-986 are compositionally biased toward basic and acidic residues; that stretch reads TSPEPQREDA. Phosphoserine is present on residues Ser978 and Ser987. Residues 1021–1034 are compositionally biased toward low complexity; that stretch reads AEPWAAAVPPEWVP. The tract at residues 1024 to 1054 is required for interaction with GET4; it reads WAAAVPPEWVPIIQQDIQSQRKVKPQPPLSD. The short motif at 1026–1068 is the Nuclear localization site element; that stretch reads AAVPPEWVPIIQQDIQSQRKVKPQPPLSDAYLSGMPAKRRKTM. Positions 1036–1146 are sufficient for the delivery of client proteins to the endoplasmic reticulum; sequence IQQDIQSQRK…NAHRAFADDP (111 aa). Thr1067 is modified (phosphothreonine). The segment at 1072–1129 is BAG-similar domain, required and sufficient for interaction with UBL4A; sequence GPQLLLSEAVSRAAKAAGARPLTSPESLSRDLEAPEVQESYRQQLRSDIQKRLQEDPN. Positions 1080 to 1090 are enriched in low complexity; that stretch reads AVSRAAKAAGA. Phosphoserine occurs at positions 1095 and 1131.

In terms of assembly, component of the BAG6/BAT3 complex, also named BAT3 complex, at least composed of BAG6, UBL4A and GET4/TRC35. Interacts with GET4; the interaction is direct and localizes BAG6 in the cytosol. Interacts with UBL4A; the interaction is direct and required for UBL4A protein stability. Interacts with AIFM1. Interacts with HSPA2. Interacts with CTCFL. Interacts with p300/EP300. Interacts (via ubiquitin-like domain) with RNF126; required for BAG6-dependent ubiquitination of proteins mislocalized to the cytosol. Interacts (via ubiquitin-like domain) with SGTA; SGTA competes with RNF126 by binding the same region of BAG6, thereby promoting deubiquitination of BAG6-target proteins and rescuing them from degradation. Interacts with ricin A chain. Interacts with VCP and AMFR; both form the VCP/p97-AMFR/gp78 complex. Interacts with SYVN1. Interacts with USP13; the interaction is direct and may mediate UBL4A deubiquitination. Interacts with ZFAND2B. Interacts with KPNA2. Interacts with UBQLN4. Ricin can induce a cleavage by the caspase CASP3. The released C-terminal peptide induces apoptosis.

The protein resides in the cytoplasm. Its subcellular location is the cytosol. It localises to the nucleus. The protein localises to the secreted. It is found in the extracellular exosome. ATP-independent molecular chaperone preventing the aggregation of misfolded and hydrophobic patches-containing proteins. Functions as part of a cytosolic protein quality control complex, the BAG6/BAT3 complex, which maintains these client proteins in a soluble state and participates in their proper delivery to the endoplasmic reticulum or alternatively can promote their sorting to the proteasome where they undergo degradation. The BAG6/BAT3 complex is involved in the post-translational delivery of tail-anchored/type II transmembrane proteins to the endoplasmic reticulum membrane. Recruited to ribosomes, it interacts with the transmembrane region of newly synthesized tail-anchored proteins and together with SGTA and ASNA1 mediates their delivery to the endoplasmic reticulum. Client proteins that cannot be properly delivered to the endoplasmic reticulum are ubiquitinated by RNF126, an E3 ubiquitin-protein ligase associated with BAG6 and are sorted to the proteasome. SGTA which prevents the recruitment of RNF126 to BAG6 may negatively regulate the ubiquitination and the proteasomal degradation of client proteins. Similarly, the BAG6/BAT3 complex also functions as a sorting platform for proteins of the secretory pathway that are mislocalized to the cytosol either delivering them to the proteasome for degradation or to the endoplasmic reticulum. The BAG6/BAT3 complex also plays a role in the endoplasmic reticulum-associated degradation (ERAD), a quality control mechanism that eliminates unwanted proteins of the endoplasmic reticulum through their retrotranslocation to the cytosol and their targeting to the proteasome. It maintains these retrotranslocated proteins in an unfolded yet soluble state condition in the cytosol to ensure their proper delivery to the proteasome. BAG6 is also required for selective ubiquitin-mediated degradation of defective nascent chain polypeptides by the proteasome. In this context, it may participate in the production of antigenic peptides and play a role in antigen presentation in immune response. BAG6 is also involved in endoplasmic reticulum stress-induced pre-emptive quality control, a mechanism that selectively attenuates the translocation of newly synthesized proteins into the endoplasmic reticulum and reroutes them to the cytosol for proteasomal degradation. BAG6 may ensure the proper degradation of these proteins and thereby protects the endoplasmic reticulum from protein overload upon stress. By inhibiting the polyubiquitination and subsequent proteasomal degradation of HSPA2 it may also play a role in the assembly of the synaptonemal complex during spermatogenesis. Also positively regulates apoptosis by interacting with and stabilizing the proapoptotic factor AIFM1. By controlling the steady-state expression of the IGF1R receptor, indirectly regulates the insulin-like growth factor receptor signaling pathway. Its function is as follows. Involved in DNA damage-induced apoptosis: following DNA damage, accumulates in the nucleus and forms a complex with p300/EP300, enhancing p300/EP300-mediated p53/TP53 acetylation leading to increase p53/TP53 transcriptional activity. When nuclear, may also act as a component of some chromatin regulator complex that regulates histone 3 'Lys-4' dimethylation (H3K4me2). Functionally, released extracellularly via exosomes, it is a ligand of the natural killer/NK cells receptor NCR3 and stimulates NK cells cytotoxicity. It may thereby trigger NK cells cytotoxicity against neighboring tumor cells and immature myeloid dendritic cells (DC). In terms of biological role, may mediate ricin-induced apoptosis. The protein is Large proline-rich protein BAG6 of Rattus norvegicus (Rat).